The following is a 238-amino-acid chain: 7-cyano-7-deazaguanine synthase (238 aa).

Residue 14 to 24 (FSGGQDSATCL) participates in ATP binding. Residues cysteine 202, cysteine 217, cysteine 220, and cysteine 223 each contribute to the Zn(2+) site.

The protein belongs to the QueC family. Requires Zn(2+) as cofactor.

The enzyme catalyses 7-carboxy-7-deazaguanine + NH4(+) + ATP = 7-cyano-7-deazaguanine + ADP + phosphate + H2O + H(+). It functions in the pathway purine metabolism; 7-cyano-7-deazaguanine biosynthesis. Functionally, catalyzes the ATP-dependent conversion of 7-carboxy-7-deazaguanine (CDG) to 7-cyano-7-deazaguanine (preQ(0)). This Nitrobacter winogradskyi (strain ATCC 25391 / DSM 10237 / CIP 104748 / NCIMB 11846 / Nb-255) protein is 7-cyano-7-deazaguanine synthase.